Reading from the N-terminus, the 466-residue chain is Bifunctional protein GlmU (466 aa).

The segment at 1 to 236 (MEVMPQPLTI…PAEALGINDR (236 aa)) is pyrophosphorylase. UDP-N-acetyl-alpha-D-glucosamine is bound by residues 13-16 (LAAG), K27, Q79, 84-85 (GT), 107-109 (YGD), G146, E161, N176, and N234. D109 contacts Mg(2+). Residue N234 participates in Mg(2+) binding. A linker region spans residues 237 to 257 (AQLAEVDRIFRDRKRRAVMAA). Residues 258–466 (GVTLIQPETI…AKKRRKLAKT (209 aa)) are N-acetyltransferase. 2 residues coordinate UDP-N-acetyl-alpha-D-glucosamine: R340 and K358. H370 (proton acceptor) is an active-site residue. UDP-N-acetyl-alpha-D-glucosamine is bound by residues Y373 and N384. Acetyl-CoA contacts are provided by residues A387, 393–394 (NY), S412, A430, and R447.

The protein in the N-terminal section; belongs to the N-acetylglucosamine-1-phosphate uridyltransferase family. In the C-terminal section; belongs to the transferase hexapeptide repeat family. In terms of assembly, homotrimer. It depends on Mg(2+) as a cofactor.

The protein localises to the cytoplasm. It catalyses the reaction alpha-D-glucosamine 1-phosphate + acetyl-CoA = N-acetyl-alpha-D-glucosamine 1-phosphate + CoA + H(+). The enzyme catalyses N-acetyl-alpha-D-glucosamine 1-phosphate + UTP + H(+) = UDP-N-acetyl-alpha-D-glucosamine + diphosphate. It participates in nucleotide-sugar biosynthesis; UDP-N-acetyl-alpha-D-glucosamine biosynthesis; N-acetyl-alpha-D-glucosamine 1-phosphate from alpha-D-glucosamine 6-phosphate (route II): step 2/2. Its pathway is nucleotide-sugar biosynthesis; UDP-N-acetyl-alpha-D-glucosamine biosynthesis; UDP-N-acetyl-alpha-D-glucosamine from N-acetyl-alpha-D-glucosamine 1-phosphate: step 1/1. The protein operates within bacterial outer membrane biogenesis; LPS lipid A biosynthesis. Functionally, catalyzes the last two sequential reactions in the de novo biosynthetic pathway for UDP-N-acetylglucosamine (UDP-GlcNAc). The C-terminal domain catalyzes the transfer of acetyl group from acetyl coenzyme A to glucosamine-1-phosphate (GlcN-1-P) to produce N-acetylglucosamine-1-phosphate (GlcNAc-1-P), which is converted into UDP-GlcNAc by the transfer of uridine 5-monophosphate (from uridine 5-triphosphate), a reaction catalyzed by the N-terminal domain. The polypeptide is Bifunctional protein GlmU (Solibacter usitatus (strain Ellin6076)).